A 2030-amino-acid chain; its full sequence is Dedicator of cytokinesis protein 3 (2030 aa).

Positions 6-67 (EEEKYGVVIC…PANYIHLKKA (62 aa)) constitute an SH3 domain. The region spanning 421 to 599 (RNDLYLTLEK…ESFFISTQLS (179 aa)) is the C2 DOCK-type domain. In terms of domain architecture, DOCKER spans 1228 to 1635 (KSEINKEEMY…LYHEFPGLDK (408 aa)). 4 disordered regions span residues 1641–1662 (SGTS…PESI), 1734–1771 (SSSQ…SLPD), 1849–1927 (DTPP…ADED), and 1951–2030 (QPCR…RGEQ). Serine 1658 bears the Phosphoserine mark. Over residues 1734–1754 (SSSQASPSSSSLSSTHSAPSQ) the composition is skewed to low complexity. Polar residues predominate over residues 1755–1765 (MITSAPSSARG). The span at 1880–1902 (GSNSTLSGSASSGVSSLSESNFG) shows a compositional bias: low complexity. The segment covering 1967–1977 (PMDPPALPPKP) has biased composition (pro residues). The SH3-binding signature appears at 1970 to 1976 (PPALPPK). 2 stretches are compositionally biased toward basic and acidic residues: residues 1984–2001 (ALEH…ERPR) and 2014–2030 (AKEE…RGEQ).

The protein belongs to the DOCK family. In terms of assembly, interacts with presenilin proteins PSEN1 and PSEN2. Interacts with CRK. In terms of tissue distribution, in normal brains, it is localized in the neuropil, and occasionally in the pyramidal cells, while in Alzheimer disease brains, it is associated with neurofibrillary tangles.

Its subcellular location is the cytoplasm. Potential guanine nucleotide exchange factor (GEF). GEF proteins activate some small GTPases by exchanging bound GDP for free GTP. Its interaction with presenilin proteins as well as its ability to stimulate Tau/MAPT phosphorylation suggest that it may be involved in Alzheimer disease. Ectopic expression in nerve cells decreases the secretion of amyloid-beta APBA1 protein and lowers the rate of cell-substratum adhesion, suggesting that it may affect the function of some small GTPase involved in the regulation of actin cytoskeleton or cell adhesion receptors. The polypeptide is Dedicator of cytokinesis protein 3 (DOCK3) (Homo sapiens (Human)).